Here is a 1363-residue protein sequence, read N- to C-terminus: Vascular endothelial growth factor receptor 3 (1363 aa).

A signal peptide spans 1-24 (MQPGAALNLRLWLCLGLLQGLANG). Over 25–775 (YSMTPPTLNI…EGSEDKGSME (751 aa)) the chain is Extracellular. N-linked (GlcNAc...) asparagine glycans are attached at residues asparagine 33, asparagine 104, asparagine 166, asparagine 251, asparagine 299, and asparagine 411. 7 Ig-like C2-type domains span residues 44 to 118 (GDSL…YIKA), 151 to 213 (KDSM…WGDQ), 230 to 326 (YDIQ…TEVI), 331 to 415 (PFIS…ISLE), 422 to 552 (PHIH…FYVT), 555 to 671 (PDGF…KYLS), and 678 to 764 (PRLT…ASVA). 2 disulfide bridges follow: cysteine 51-cysteine 111 and cysteine 158-cysteine 206. A disulfide bond links cysteine 252 and cysteine 310. 3 disulfide bridges follow: cysteine 445–cysteine 534, cysteine 466–cysteine 486, and cysteine 578–cysteine 653. N-linked (GlcNAc...) asparagine glycosylation is found at asparagine 515, asparagine 527, asparagine 582, asparagine 594, asparagine 683, and asparagine 690. A disulfide bond links cysteine 699 and cysteine 751. An N-linked (GlcNAc...) asparagine glycan is attached at asparagine 758. The helical transmembrane segment at 776–796 (IVILIGTGVIAVFFWVLLLLI) threads the bilayer. The Cytoplasmic portion of the chain corresponds to 797–1363 (FCNMKRPAHA…GSTFFADSSY (567 aa)). Tyrosine 830 and tyrosine 833 each carry phosphotyrosine; by SRC. The 329-residue stretch at 845 to 1173 (LHLGRVLGHG…DLVEILGDLL (329 aa)) folds into the Protein kinase domain. ATP contacts are provided by residues 851-859 (LGHGAFGKV) and lysine 879. Aspartate 1037 acts as the Proton acceptor in catalysis. Tyrosine 1063 bears the Phosphotyrosine; by autocatalysis and SRC mark. Residues tyrosine 1068, tyrosine 1230, tyrosine 1231, and tyrosine 1265 each carry the phosphotyrosine; by autocatalysis modification. The disordered stretch occupies residues 1288-1330 (ESRHRPEGSFSCKGPGQHMDIPRGHPDPQGRRRRPTQGAQGGK). Basic and acidic residues predominate over residues 1307–1317 (DIPRGHPDPQG). Phosphotyrosine; by autocatalysis and SRC is present on residues tyrosine 1333 and tyrosine 1337. Tyrosine 1363 is subject to Phosphotyrosine; by autocatalysis.

Belongs to the protein kinase superfamily. Tyr protein kinase family. CSF-1/PDGF receptor subfamily. Interacts with VEGFC and VEGFD. Monomer in the absence of bound VEGFC or VEGFD. Homodimer in the presence of bound VEGFC or VEGFD. Can also form a heterodimer with KDR. Interacts with PTPN14; the interaction is enhanced by stimulation with VEGFC. Interacts with CRK, GRB2, PTK2/FAK1, SHC1, PIK3R1 and PTPN11/SHP-2. Identified in a complex with SRC and ITGB1. Post-translationally, autophosphorylated on tyrosine residues upon ligand binding. Autophosphorylation occurs in trans, i.e. one subunit of the dimeric receptor phosphorylates tyrosine residues on the other subunit. Phosphorylation in response to H(2)O(2) is mediated by a process that requires SRC and PRKCD activity. Phosphorylation at Tyr-1068 is required for autophosphorylation at additional tyrosine residues. Phosphorylation at Tyr-1063 and Tyr-1337 is important for interaction with CRK and subsequent activation of MAPK8. Phosphorylation at Tyr-1230, Tyr-1231 and Tyr-1337 is important for interaction with GRB2 and subsequent activation of the AKT1 and MAPK1/ERK2 and/or MAPK3/ERK1 signaling pathways. In response to endothelial cell adhesion onto collagen, can also be phosphorylated in the absence of FLT4 kinase activity by SRC. Expressed in adult lung and liver, and in fetal liver, brain, intestine and placenta.

It is found in the cell membrane. The protein resides in the cytoplasm. It localises to the nucleus. The catalysed reaction is L-tyrosyl-[protein] + ATP = O-phospho-L-tyrosyl-[protein] + ADP + H(+). Its activity is regulated as follows. Present in an inactive conformation in the absence of bound ligand. Binding of VEGFC or VEGFD leads to dimerization and activation by autophosphorylation on tyrosine residues. Its function is as follows. Tyrosine-protein kinase that acts as a cell-surface receptor for VEGFC and VEGFD, and plays an essential role in adult lymphangiogenesis and in the development of the vascular network and the cardiovascular system during embryonic development. Promotes proliferation, survival and migration of endothelial cells, and regulates angiogenic sprouting. Signaling by activated FLT4 leads to enhanced production of VEGFC, and to a lesser degree VEGFA, thereby creating a positive feedback loop that enhances FLT4 signaling. Modulates KDR signaling by forming heterodimers. Mediates activation of the MAPK1/ERK2, MAPK3/ERK1 signaling pathway, of MAPK8 and the JUN signaling pathway, and of the AKT1 signaling pathway. Phosphorylates SHC1. Mediates phosphorylation of PIK3R1, the regulatory subunit of phosphatidylinositol 3-kinase. Promotes phosphorylation of MAPK8 at 'Thr-183' and 'Tyr-185', and of AKT1 at 'Ser-473'. The protein is Vascular endothelial growth factor receptor 3 (Flt4) of Mus musculus (Mouse).